The following is a 602-amino-acid chain: MRNKICEELNKSDIGKEVNLCGWVDRRRDHGGVIFIDLRDHSGFMQITINPEDGETLFKQAEILRNETVIMVNGIVNERPKDSINKNIITGELELKVQDLQILNQIKNNLPFPVSVHDYENTKEELRLKYRYLDIRRGKLLENLKTRHKIIKAIRNYLDNSGFTEVETPLLTKSTPEGARDFLVPARLSNGDFFALPQSPQLFKQLLMVGGLDKYYQIAKCFRDEDLRADRQPEFTQLDIEMSFVSEEEIIAFNEKLIKHIWKNVLNINLNEDFPRMSWQEAMDNYGTDRPDTRYGMLLKNLGEILGNIGFNIFTKAIQMGGAIKSITIKNGNSSISNVRIKPGGDIFKVAQEAGAGGLAFIRVKGDELETIGAIKNNLNKDHISNILKITEAEDGDLILLGAGSTKIVNQSLDRVRQYIAKDLNLLENQKAQSQWNFLWITDFPMFEMNEEEKRFEALHHPFCSPKNVKFEDKKELTKKIETSTAYAYDLVLNGLELGGGSLRIHQAEMQKEVLRTVGLTDHQIDEKFGFLIEALEMGAPPHGGIAFGLDRITMLILGVDSIRETIAFPKNQQAKCLLTNAPSNVSKSQLKELDIEITIDE.

Position 177 (Glu-177) interacts with L-aspartate. The aspartate stretch occupies residues 201–204 (QLFK). Residue Arg-223 participates in L-aspartate binding. ATP is bound by residues 223-225 (RDE) and Gln-232. L-aspartate is bound at residue His-460. Glu-497 is an ATP binding site. Residue Arg-504 coordinates L-aspartate. 549–552 (GLDR) provides a ligand contact to ATP.

This sequence belongs to the class-II aminoacyl-tRNA synthetase family. Type 1 subfamily. In terms of assembly, homodimer.

It localises to the cytoplasm. It carries out the reaction tRNA(Asx) + L-aspartate + ATP = L-aspartyl-tRNA(Asx) + AMP + diphosphate. Functionally, aspartyl-tRNA synthetase with relaxed tRNA specificity since it is able to aspartylate not only its cognate tRNA(Asp) but also tRNA(Asn). Reaction proceeds in two steps: L-aspartate is first activated by ATP to form Asp-AMP and then transferred to the acceptor end of tRNA(Asp/Asn). The sequence is that of Aspartate--tRNA(Asp/Asn) ligase from Prochlorococcus marinus (strain MIT 9515).